A 131-amino-acid polypeptide reads, in one-letter code: Colicin-N immunity protein (131 aa).

2 helical membrane passes run 66–84 (ILTPFTILYISMIYCFLLT) and 104–124 (VFVFFLYNTIYWDIYIHIFVL).

The protein localises to the cell membrane. The polypeptide is Colicin-N immunity protein (cni) (Escherichia coli).